An 82-amino-acid chain; its full sequence is Small ribosomal subunit protein uS17 (82 aa).

It belongs to the universal ribosomal protein uS17 family. Part of the 30S ribosomal subunit.

Functionally, one of the primary rRNA binding proteins, it binds specifically to the 5'-end of 16S ribosomal RNA. The sequence is that of Small ribosomal subunit protein uS17 from Rhodopseudomonas palustris (strain HaA2).